Reading from the N-terminus, the 941-residue chain is Isoleucine--tRNA ligase (941 aa).

The 'HIGH' region signature appears at P59–H69. L-isoleucyl-5'-AMP is bound at residue E562. The 'KMSKS' region signature appears at K603–S607. K606 provides a ligand contact to ATP. 4 residues coordinate Zn(2+): C904, C907, C924, and C927.

The protein belongs to the class-I aminoacyl-tRNA synthetase family. IleS type 1 subfamily. Monomer. Requires Zn(2+) as cofactor.

The protein localises to the cytoplasm. It carries out the reaction tRNA(Ile) + L-isoleucine + ATP = L-isoleucyl-tRNA(Ile) + AMP + diphosphate. Its function is as follows. Catalyzes the attachment of isoleucine to tRNA(Ile). As IleRS can inadvertently accommodate and process structurally similar amino acids such as valine, to avoid such errors it has two additional distinct tRNA(Ile)-dependent editing activities. One activity is designated as 'pretransfer' editing and involves the hydrolysis of activated Val-AMP. The other activity is designated 'posttransfer' editing and involves deacylation of mischarged Val-tRNA(Ile). The sequence is that of Isoleucine--tRNA ligase from Haemophilus influenzae (strain PittEE).